A 1977-amino-acid chain; its full sequence is Echinoderm microtubule-associated protein-like 5 (1977 aa).

11 WD repeats span residues 59–100, 104–145, 148–187, 195–233, 235–273, 280–321, 323–362, 364–403, 406–445, 449–488, and 561–601; these read GHSD…TVSV, VHTH…MLSM, GHTD…LTPK, GDLQ…RTIQ, AHTA…TVID, GYKG…LIMQ, HCEG…LIAR, NMDE…EVVH, DRKE…KKVG, GSLS…EVTS, and GHSA…KLKD. A disordered region spans residues 609-629; it reads ESLTESNSDESDSDLSDVPEL. Residues 615–629 show a composition bias toward acidic residues; it reads NSDESDSDLSDVPEL. WD repeat units follow at residues 725–766, 770–811, 814–853, 861–900, 901–940, 996–1035, 1038–1077, 1080–1120, and 1236–1276; these read GHDD…PLSI, YHQY…KLSV, GSKD…LIGR, GKND…KTVK, AHDG…KTYA, HMEG…CMLA, KLKK…DLVS, HRKD…RVGV, and AHST…HREK. Disordered regions lie at residues 1274–1299 and 1323–1363; these read REKK…SDVT and PHLQ…NVGK. A compositionally biased stretch (acidic residues) spans 1281 to 1294; sequence SEESDTDSEEDGGY. Positions 1326–1337 are enriched in basic and acidic residues; the sequence is QQKEPSVDERQG. WD repeat units follow at residues 1420–1471, 1475–1516, 1519–1558, 1568–1606, 1608–1654, 1699–1739, 1741–1782, 1783–1822, 1895–1934, and 1940–1977; these read EHND…TLSI, SHSK…KIAS, GHNQ…LLSK, ARMQ…RVVA, AHNG…RAFR, GHVD…MLNK, NLGH…GKKR, DRRC…TLNR, AEKA…KFAK, and GHSP…HTPH.

Belongs to the WD repeat EMAP family. As to expression, highly expressed in brain, especially in hippocampus, cerebellum and olfactory bulb (at protein level).

The protein resides in the cytoplasm. It is found in the cytoskeleton. May modify the assembly dynamics of microtubules, such that microtubules are slightly longer, but more dynamic. This is Echinoderm microtubule-associated protein-like 5 (Eml5) from Rattus norvegicus (Rat).